A 281-amino-acid polypeptide reads, in one-letter code: Arabinooligosaccharides transport system permease protein AraQ (281 aa).

The next 6 membrane-spanning stretches (helical) occupy residues 15–35 (LTLF…CLLL), 81–101 (LVLG…IGYG), 112–132 (IIFV…MLPL), 142–162 (IDSY…VFFF), 185–205 (FGIF…AMII), and 247–267 (MLIS…LFFQ). Positions 77–266 (FFNSLVLGLF…LPVIIIFLFF (190 aa)) constitute an ABC transmembrane type-1 domain.

This sequence belongs to the binding-protein-dependent transport system permease family. MalFG subfamily. In terms of assembly, the complex is composed of two ATP-binding proteins (MsmX), two transmembrane proteins (AraP and AraQ) and a solute-binding protein (AraN).

It localises to the cell membrane. In terms of biological role, part of the ABC transporter complex AraNPQ involved in the uptake of arabinooligosaccharides. Transports alpha-1,5-arabinooligosaccharides, at least up to four L-arabinosyl units. Responsible for the translocation of the substrate across the membrane. The sequence is that of Arabinooligosaccharides transport system permease protein AraQ from Bacillus subtilis (strain 168).